The primary structure comprises 596 residues: Beta-glucuronidase (596 aa).

Positions 168 and 412 each coordinate D-glucuronate. Glu-413 functions as the Proton donor in the catalytic mechanism. D-glucuronate is bound by residues Asn-464, Tyr-470, Glu-502, Trp-547, and Lys-566. Glu-502 serves as the catalytic Nucleophile. The N-K motif signature appears at 564 to 566 (NKK).

It belongs to the glycosyl hydrolase 2 family.

It localises to the cytoplasm. The catalysed reaction is a beta-D-glucuronoside + H2O = D-glucuronate + an alcohol. Displays beta-glucuronidase activity with the artificial substrate p-nitrophenyl-beta-D-glucuronide (PNPG). Is probably involved in the metabolism of oligosaccharides containing the 3-O-beta-D-glucopyranosyl-beta-D-glucuronide structure released from bacterial and plant acidic carbohydrates. The polypeptide is Beta-glucuronidase (Paenibacillus borealis).